The sequence spans 405 residues: Probable tRNA sulfurtransferase (405 aa).

Positions 60–165 (TEVDKRLKKV…QDAVYISNQL (106 aa)) constitute a THUMP domain. Residues 183-184 (ML), 208-209 (HF), Arg-265, Gly-287, and Gln-296 each bind ATP.

This sequence belongs to the ThiI family.

Its subcellular location is the cytoplasm. It catalyses the reaction [ThiI sulfur-carrier protein]-S-sulfanyl-L-cysteine + a uridine in tRNA + 2 reduced [2Fe-2S]-[ferredoxin] + ATP + H(+) = [ThiI sulfur-carrier protein]-L-cysteine + a 4-thiouridine in tRNA + 2 oxidized [2Fe-2S]-[ferredoxin] + AMP + diphosphate. The catalysed reaction is [ThiS sulfur-carrier protein]-C-terminal Gly-Gly-AMP + S-sulfanyl-L-cysteinyl-[cysteine desulfurase] + AH2 = [ThiS sulfur-carrier protein]-C-terminal-Gly-aminoethanethioate + L-cysteinyl-[cysteine desulfurase] + A + AMP + 2 H(+). The protein operates within cofactor biosynthesis; thiamine diphosphate biosynthesis. Functionally, catalyzes the ATP-dependent transfer of a sulfur to tRNA to produce 4-thiouridine in position 8 of tRNAs, which functions as a near-UV photosensor. Also catalyzes the transfer of sulfur to the sulfur carrier protein ThiS, forming ThiS-thiocarboxylate. This is a step in the synthesis of thiazole, in the thiamine biosynthesis pathway. The sulfur is donated as persulfide by IscS. This is Probable tRNA sulfurtransferase from Lactobacillus acidophilus (strain ATCC 700396 / NCK56 / N2 / NCFM).